The primary structure comprises 431 residues: Islet cell autoantigen 1-like protein (431 aa).

Residues 44 to 247 (ASDAELDAKL…TAQMMTQIQE (204 aa)) enclose the AH domain. 2 disordered regions span residues 295 to 316 (EEEE…PRDS) and 351 to 372 (CGSP…SLTS). A compositionally biased stretch (basic and acidic residues) spans 301–316 (RFEREPAVARALPRDS). Polar residues predominate over residues 356 to 372 (TGLTSQEPSVGPGSLTS).

The chain is Islet cell autoantigen 1-like protein (Ica1l) from Mus musculus (Mouse).